We begin with the raw amino-acid sequence, 309 residues long: Dihydroorotate dehydrogenase B (NAD(+)), catalytic subunit (309 aa).

Residues Ser21 and 45 to 46 contribute to the FMN site; that span reads KA. Substrate-binding positions include Lys45 and 69–73; that span reads NAIGL. Asn99 and Asn127 together coordinate FMN. A substrate-binding site is contributed by Asn127. Cys130 (nucleophile) is an active-site residue. Positions 165 and 191 each coordinate FMN. Residue 192–193 participates in substrate binding; that stretch reads NT. FMN contacts are provided by residues Gly217, 243-244, and 265-266; these read GG and GT.

It belongs to the dihydroorotate dehydrogenase family. Type 1 subfamily. As to quaternary structure, heterotetramer of 2 PyrK and 2 PyrD type B subunits. FMN is required as a cofactor.

The protein resides in the cytoplasm. It catalyses the reaction (S)-dihydroorotate + NAD(+) = orotate + NADH + H(+). The protein operates within pyrimidine metabolism; UMP biosynthesis via de novo pathway; orotate from (S)-dihydroorotate (NAD(+) route): step 1/1. In terms of biological role, catalyzes the conversion of dihydroorotate to orotate with NAD(+) as electron acceptor. The protein is Dihydroorotate dehydrogenase B (NAD(+)), catalytic subunit (pyrD) of Bacillus cereus (strain AH187).